Reading from the N-terminus, the 645-residue chain is Sister chromatid cohesion protein 1 (645 aa).

Disordered stretches follow at residues 292-311 (FEPE…FALE), 495-527 (QSGF…GQLE), and 619-645 (CPLS…MRPV).

The protein belongs to the rad21 family. In terms of assembly, component of the cohesin complex, composed of the smc-1 and smc-3 heterodimer attached via their hinge domain, scc-1 which links them, and scc-3. Interacts with smc-1, smc-3, scc-3 and tim-1.

Its subcellular location is the nucleus. It is found in the chromosome. The protein localises to the cytoplasm. Its function is as follows. Cleavable component of the cohesin complex involved in chromosome cohesion during cell cycle. The cohesin complex is required for the cohesion of sister chromatids after DNA replication. The cohesin complex apparently forms a large proteinaceous ring within which sister chromatids can be trapped. At metaphase-anaphase transition, this protein is cleaved and dissociates from chromatin, allowing sister chromatids to segregate. This Caenorhabditis elegans protein is Sister chromatid cohesion protein 1.